The chain runs to 472 residues: Gamma-aminobutyric acid receptor subunit beta-2 (472 aa).

A signal peptide spans 1-23 (RVRKKDYFGIWSFPLIIAAVCAQ). Over 24 to 239 (SVNDPSNMSL…LSLSFKLKRN (216 aa)) the chain is Extracellular. N-linked (GlcNAc...) asparagine glycosylation is found at Asn30 and Asn102. Tyr119 is a binding site for histamine. Cys158 and Cys172 are oxidised to a cystine. Histamine-binding positions include 178 to 179 (SY) and Thr224. 4-aminobutanoate is bound by residues Tyr179 and Thr224. 3 helical membrane passes run 240-260 (IGYFILQTYMPSILITILSWV), 271-290 (ARVALGITTVLTMTTINTHL), and 309-329 (GCFVFVFMALLEYALVNYIFF). The etomidate binding; allosteric effector stretch occupies residues 287–308 (NTHLRETLPKIPYVKAIDMYLM). At 330 to 450 (GRGPQRQKKA…LTDVNAIDRW (121 aa)) the chain is on the cytoplasmic side. Tyr401 carries the post-translational modification Phosphotyrosine. A helical membrane pass occupies residues 451–471 (SRIFFPVVFSFFNIVYWLYYV).

This sequence belongs to the ligand-gated ion channel (TC 1.A.9) family. Gamma-aminobutyric acid receptor (TC 1.A.9.5) subfamily. GABRB2 sub-subfamily. As to quaternary structure, heteropentamer, formed by a combination of alpha (GABRA1-6), beta (GABRB1-3), gamma (GABRG1-3), delta (GABRD), epsilon (GABRE), rho (GABRR1-3), pi (GABRP) and theta (GABRQ) chains, each subunit exhibiting distinct physiological and pharmacological properties. Interacts with UBQLN1. May interact with KIF21B. Identified in a complex of 720 kDa composed of LHFPL4, NLGN2, GABRA1, GABRB2, GABRG2 and GABRB3. Post-translationally, glycosylated.

Its subcellular location is the postsynaptic cell membrane. It is found in the cell membrane. It localises to the cytoplasmic vesicle membrane. It carries out the reaction chloride(in) = chloride(out). With respect to regulation, allosterically activated by benzodiazepines. Allosterically activated by the anesthetic etomidate. Inhibited by the antagonist bicuculline. Potentiated by histamine. Its function is as follows. Beta subunit of the heteropentameric ligand-gated chloride channel gated by gamma-aminobutyric acid (GABA), a major inhibitory neurotransmitter in the brain. GABA-gated chloride channels, also named GABA(A) receptors (GABAAR), consist of five subunits arranged around a central pore and contain GABA active binding site(s) located at the alpha and beta subunit interface(s). When activated by GABA, GABAARs selectively allow the flow of chloride anions across the cell membrane down their electrochemical gradient. Chloride influx into the postsynaptic neuron following GABAAR opening decreases the neuron ability to generate a new action potential, thereby reducing nerve transmission. GABAARs containing alpha-1 and beta-2 or -3 subunits exhibit synaptogenic activity; the gamma-2 subunit being necessary but not sufficient to induce rapid synaptic contacts formation. Extrasynaptic beta-2 receptors contribute to the tonic GABAergic inhibition. Beta-containing GABAARs can simultaneously bind GABA and histamine where histamine binds at the interface of two neighboring beta subunits, which may be involved in the regulation of sleep and wakefulness. This Bos taurus (Bovine) protein is Gamma-aminobutyric acid receptor subunit beta-2 (GABRB2).